The chain runs to 450 residues: Putative zinc metalloprotease PA3649 (450 aa).

H21 serves as a coordination point for Zn(2+). E22 is an active-site residue. Residue H25 coordinates Zn(2+). A helical transmembrane segment spans residues 97-119; the sequence is IAIVAAGPIANFLLAILFFWVVA. The region spanning 199–291 is the PDZ domain; the sequence is GWLKGEDNPD…VLDVALELAV (93 aa). A helical membrane pass occupies residues 425-444; that stretch reads AWGMQIGISLVVGVMLLALV.

It belongs to the peptidase M50B family. The cofactor is Zn(2+).

The protein resides in the cell inner membrane. The chain is Putative zinc metalloprotease PA3649 from Pseudomonas aeruginosa (strain ATCC 15692 / DSM 22644 / CIP 104116 / JCM 14847 / LMG 12228 / 1C / PRS 101 / PAO1).